The sequence spans 317 residues: 4-hydroxy-3-methylbut-2-enyl diphosphate reductase (317 aa).

Cys-12 serves as a coordination point for [4Fe-4S] cluster. (2E)-4-hydroxy-3-methylbut-2-enyl diphosphate-binding residues include His-41 and His-74. Dimethylallyl diphosphate is bound by residues His-41 and His-74. 2 residues coordinate isopentenyl diphosphate: His-41 and His-74. Cys-97 contacts [4Fe-4S] cluster. His-125 lines the (2E)-4-hydroxy-3-methylbut-2-enyl diphosphate pocket. His-125 serves as a coordination point for dimethylallyl diphosphate. His-125 is a binding site for isopentenyl diphosphate. Residue Glu-127 is the Proton donor of the active site. Position 168 (Thr-168) interacts with (2E)-4-hydroxy-3-methylbut-2-enyl diphosphate. Cys-198 lines the [4Fe-4S] cluster pocket. Positions 226, 227, 228, and 270 each coordinate (2E)-4-hydroxy-3-methylbut-2-enyl diphosphate. Dimethylallyl diphosphate contacts are provided by Ser-226, Ser-227, Asn-228, and Ser-270. Isopentenyl diphosphate is bound by residues Ser-226, Ser-227, Asn-228, and Ser-270.

This sequence belongs to the IspH family. As to quaternary structure, homodimer. It depends on [4Fe-4S] cluster as a cofactor.

It carries out the reaction isopentenyl diphosphate + 2 oxidized [2Fe-2S]-[ferredoxin] + H2O = (2E)-4-hydroxy-3-methylbut-2-enyl diphosphate + 2 reduced [2Fe-2S]-[ferredoxin] + 2 H(+). The catalysed reaction is dimethylallyl diphosphate + 2 oxidized [2Fe-2S]-[ferredoxin] + H2O = (2E)-4-hydroxy-3-methylbut-2-enyl diphosphate + 2 reduced [2Fe-2S]-[ferredoxin] + 2 H(+). It participates in isoprenoid biosynthesis; dimethylallyl diphosphate biosynthesis; dimethylallyl diphosphate from (2E)-4-hydroxy-3-methylbutenyl diphosphate: step 1/1. It functions in the pathway isoprenoid biosynthesis; isopentenyl diphosphate biosynthesis via DXP pathway; isopentenyl diphosphate from 1-deoxy-D-xylulose 5-phosphate: step 6/6. In terms of biological role, catalyzes the conversion of 1-hydroxy-2-methyl-2-(E)-butenyl 4-diphosphate (HMBPP) into a mixture of isopentenyl diphosphate (IPP) and dimethylallyl diphosphate (DMAPP). Acts in the terminal step of the DOXP/MEP pathway for isoprenoid precursor biosynthesis. This Yersinia pseudotuberculosis serotype O:1b (strain IP 31758) protein is 4-hydroxy-3-methylbut-2-enyl diphosphate reductase.